Here is a 673-residue protein sequence, read N- to C-terminus: Beta-galactosidase GalA (673 aa).

R105 lines the substrate pocket. C109 is a Zn(2+) binding site. Residue N143 participates in substrate binding. E144 (proton donor) is an active-site residue. Positions 149, 151, and 154 each coordinate Zn(2+). The Nucleophile role is filled by E308. Substrate-binding positions include W316 and 356-359 (EKFH).

This sequence belongs to the glycosyl hydrolase 42 family. Homodimer.

The catalysed reaction is Hydrolysis of terminal non-reducing beta-D-galactose residues in beta-D-galactosides.. With respect to regulation, inhibited by hydrolysis end products D-galactose and D-glucose. The hydrolysis of o-nitrophenyl-beta-D-galactopyranoside (ONPG) is slightly activated by monovalent ions, Na(+) and K(+). Concentrations of these ions in the range of 1-100 mM exert the stimulating effects. The presence of 1 mM Mn(2+) together with the presence of 10 mM Na(+) slightly stimulates the activity, while presence of 10 mM Mn(2+) inhibits the activity by about 40%. Functionally, catalyzes the hydrolysis of lactose to its constituent monosaccharides glucose and galactose. Possesses a low level of transgalactosylation activity for the production of galacto-oligosaccharides (GOS) from lactose. The polypeptide is Beta-galactosidase GalA (Bacillus licheniformis (strain ATCC 14580 / DSM 13 / JCM 2505 / CCUG 7422 / NBRC 12200 / NCIMB 9375 / NCTC 10341 / NRRL NRS-1264 / Gibson 46)).